The following is a 389-amino-acid chain: Succinate--CoA ligase [ADP-forming] subunit beta (389 aa).

Residues 9–244 (KAVLAKYGVP…LTEEDPAEVE (236 aa)) enclose the ATP-grasp domain. ATP is bound by residues Lys46, 53–55 (GRG), Glu99, Ser102, and Glu107. 2 residues coordinate Mg(2+): Asn199 and Asp213. Substrate is bound by residues Asn264 and 321–323 (GIM).

It belongs to the succinate/malate CoA ligase beta subunit family. In terms of assembly, heterotetramer of two alpha and two beta subunits. Mg(2+) serves as cofactor.

It carries out the reaction succinate + ATP + CoA = succinyl-CoA + ADP + phosphate. The enzyme catalyses GTP + succinate + CoA = succinyl-CoA + GDP + phosphate. The protein operates within carbohydrate metabolism; tricarboxylic acid cycle; succinate from succinyl-CoA (ligase route): step 1/1. Its function is as follows. Succinyl-CoA synthetase functions in the citric acid cycle (TCA), coupling the hydrolysis of succinyl-CoA to the synthesis of either ATP or GTP and thus represents the only step of substrate-level phosphorylation in the TCA. The beta subunit provides nucleotide specificity of the enzyme and binds the substrate succinate, while the binding sites for coenzyme A and phosphate are found in the alpha subunit. In Parvibaculum lavamentivorans (strain DS-1 / DSM 13023 / NCIMB 13966), this protein is Succinate--CoA ligase [ADP-forming] subunit beta.